Reading from the N-terminus, the 464-residue chain is UDP-glycosyltransferase 76C1 (464 aa).

UDP-alpha-D-glucose is bound by residues serine 279, 338 to 340 (APQ), 355 to 363 (HNGWNSTLE), and 377 to 380 (KWDQ).

This sequence belongs to the UDP-glycosyltransferase family.

With respect to regulation, inhibited by olomoucine and 3-isobutyl-1-methylxanthine. Involved in the N-glucosylation of cytokinins. Catalyzes the formation of both the 7-N and the 9-N-glucosides. This is UDP-glycosyltransferase 76C1 (UGT76C1) from Arabidopsis thaliana (Mouse-ear cress).